Reading from the N-terminus, the 440-residue chain is (S)-N-methylcoclaurine 3'-hydroxylase-like protein (440 aa).

A helical; Signal-anchor for type II membrane protein membrane pass occupies residues 2–21; it reads EIVTVALIAIVFTTFLYLIV. Residue Cys430 participates in heme binding.

The protein belongs to the cytochrome P450 family. It depends on heme as a cofactor.

It localises to the membrane. Its function is as follows. Involved in the biosynthesis of benzylisoquinoline alkaloids. Probably involved in papaverine biosynthesis since its transcripts are abundant only in cultivars with substantial papaverine accumulation. May catalyze the 3'-hydroxylation of (S)-coclaurine. The chain is (S)-N-methylcoclaurine 3'-hydroxylase-like protein from Papaver somniferum (Opium poppy).